A 143-amino-acid polypeptide reads, in one-letter code: Ribonuclease H (143 aa).

Residues 1–140 (MKVEIYTDGA…VDALANLGIE (140 aa)) enclose the RNase H type-1 domain. Asp8, Glu46, Asp68, and Asp132 together coordinate Mg(2+).

Belongs to the RNase H family. Monomer. It depends on Mg(2+) as a cofactor.

Its subcellular location is the cytoplasm. The enzyme catalyses Endonucleolytic cleavage to 5'-phosphomonoester.. Its function is as follows. Endonuclease that specifically degrades the RNA of RNA-DNA hybrids. This chain is Ribonuclease H, found in Legionella pneumophila (strain Lens).